Here is a 304-residue protein sequence, read N- to C-terminus: Aspartate carbamoyltransferase catalytic subunit (304 aa).

Carbamoyl phosphate contacts are provided by Arg-49 and Thr-50. L-aspartate is bound at residue Lys-77. The carbamoyl phosphate site is built by Arg-99, His-127, and Gln-130. L-aspartate contacts are provided by Arg-160 and Arg-211. The carbamoyl phosphate site is built by Ala-252 and Pro-253.

Belongs to the aspartate/ornithine carbamoyltransferase superfamily. ATCase family. Heterododecamer (2C3:3R2) of six catalytic PyrB chains organized as two trimers (C3), and six regulatory PyrI chains organized as three dimers (R2).

The enzyme catalyses carbamoyl phosphate + L-aspartate = N-carbamoyl-L-aspartate + phosphate + H(+). It functions in the pathway pyrimidine metabolism; UMP biosynthesis via de novo pathway; (S)-dihydroorotate from bicarbonate: step 2/3. In terms of biological role, catalyzes the condensation of carbamoyl phosphate and aspartate to form carbamoyl aspartate and inorganic phosphate, the committed step in the de novo pyrimidine nucleotide biosynthesis pathway. The sequence is that of Aspartate carbamoyltransferase catalytic subunit from Bacillus cytotoxicus (strain DSM 22905 / CIP 110041 / 391-98 / NVH 391-98).